A 354-amino-acid polypeptide reads, in one-letter code: Inactive ADP-ribosyltransferase ARH2 (354 aa).

At serine 27 the chain carries Phosphoserine.

This sequence belongs to the ADP-ribosylglycohydrolase family.

Its subcellular location is the cytoplasm. The protein resides in the myofibril. It is found in the sarcomere. Required for myofibril assembly and outgrowth of the cardiac chambers in the developing heart. Appears to be catalytically inactive, showing no activity against O-acetyl-ADP-ribose. The chain is Inactive ADP-ribosyltransferase ARH2 (ADPRHL1) from Homo sapiens (Human).